Consider the following 189-residue polypeptide: Elongation factor P (189 aa).

It belongs to the elongation factor P family.

Its subcellular location is the cytoplasm. Its pathway is protein biosynthesis; polypeptide chain elongation. Functionally, involved in peptide bond synthesis. Stimulates efficient translation and peptide-bond synthesis on native or reconstituted 70S ribosomes in vitro. Probably functions indirectly by altering the affinity of the ribosome for aminoacyl-tRNA, thus increasing their reactivity as acceptors for peptidyl transferase. This is Elongation factor P from Campylobacter jejuni subsp. doylei (strain ATCC BAA-1458 / RM4099 / 269.97).